The following is a 333-amino-acid chain: Transcription initiation factor IIB (333 aa).

Residues 33–64 (EVYRCPICGNDRFVYNYERGEIVCIVCGAVVQ) form a TFIIB-type zinc finger. Zn(2+) is bound by residues C37, C40, C56, and C59. 2 repeat units span residues 149–232 (QELE…LREL) and 243–324 (LYIS…ELAK).

Belongs to the TFIIB family.

Stabilizes TBP binding to an archaeal box-A promoter. Also responsible for recruiting RNA polymerase II to the pre-initiation complex (DNA-TBP-TFIIB). In Pyrobaculum islandicum (strain DSM 4184 / JCM 9189 / GEO3), this protein is Transcription initiation factor IIB.